A 453-amino-acid polypeptide reads, in one-letter code: MAPQLLLCLILTFLWSLPEAESNVFLKSKVANRFLQRTKRSNSLFEEIRPGNIERECIEEKCSKEEAREVFEDNEKTETFWNVYVDGDQCSSNPCHYRGTCKDGIGSYTCTCLPNYEGKNCEKVLFKSCRAFNGNCWHFCKRVQSETQCSCAESYLLGVDGHSCVAEGDFSCGRNIKARNKREASLPDFVQSQKATVLKKSDNPSPDIRIVNGMDCKLGECPWQAVLINEKGEVFCGGTILSPIHVLTAAHCINQTKSVSVIVGEIDISRKETRRLLSVDKIYVHKKFVPPNSYYQNIDRFAYDYDIAIIRMKTPIQFSENVVPACLPTADFAKEVLMKQDSGIVSGFGRTQSIGYTSNILKVITVPYVDRHTCMLSSNFRITQNMFCAGYDTLPQDACQGDSGGPHITAYGDTHFVTGIISWGEGCARKGKYGVYTKVSNFIPWIKKIMSLK.

The signal sequence occupies residues 1–20 (MAPQLLLCLILTFLWSLPEA). Residues 21-40 (ESNVFLKSKVANRFLQRTKR) constitute a propeptide that is removed on maturation. The region spanning 41 to 86 (SNSLFEEIRPGNIERECIEEKCSKEEAREVFEDNEKTETFWNVYVD) is the Gla domain. Glutamate 46, glutamate 47, glutamate 54, glutamate 56, glutamate 59, glutamate 60, glutamate 65, glutamate 66, glutamate 69, glutamate 72, and glutamate 75 each carry 4-carboxyglutamate. Cysteine 57 and cysteine 62 are joined by a disulfide. One can recognise an EGF-like 1; calcium-binding domain in the interval 86–122 (DGDQCSSNPCHYRGTCKDGIGSYTCTCLPNYEGKNCE). 11 disulfides stabilise this stretch: cysteine 90-cysteine 101, cysteine 95-cysteine 110, cysteine 112-cysteine 121, cysteine 129-cysteine 140, cysteine 136-cysteine 149, cysteine 151-cysteine 164, cysteine 172-cysteine 326, cysteine 216-cysteine 221, cysteine 236-cysteine 252, cysteine 374-cysteine 388, and cysteine 399-cysteine 427. Serine 92 carries an O-linked (Hex...) serine glycan. Residues 129-164 (CRAFNGNCWHFCKRVQSETQCSCAESYLLGVDGHSC) form the EGF-like 2 domain. Positions 182–209 (REASLPDFVQSQKATVLKKSDNPSPDIR) are cleaved as a propeptide — activation peptide. The 242-residue stretch at 210–451 (IVNGMDCKLG…FIPWIKKIMS (242 aa)) folds into the Peptidase S1 domain. Histidine 251 (charge relay system) is an active-site residue. An N-linked (GlcNAc...) asparagine glycan is attached at asparagine 254. Catalysis depends on aspartate 306, which acts as the Charge relay system. Serine 403 acts as the Charge relay system in catalysis.

Belongs to the peptidase S1 family. Snake venom subfamily. As to quaternary structure, heterodimer of a light chain and a heavy chain; disulfide-linked. Gamma-carboxyglutamate residues are formed by vitamin K dependent carboxylation. These residues are essential for the binding of calcium. In terms of tissue distribution, expressed by the venom gland.

It localises to the secreted. It carries out the reaction Selective cleavage of Arg-|-Thr and then Arg-|-Ile bonds in prothrombin to form thrombin.. Snake prothrombin activator that attacks the hemostatic system of prey. This protein is functionally similar to blood coagulation factor Xa. This is Venom prothrombin activator notecarin-D2 from Notechis scutatus scutatus (Mainland tiger snake).